Consider the following 395-residue polypeptide: Renin (395 aa).

Positions M1–A21 are cleaved as a signal peptide. A propeptide spans L22–K43 (activation peptide). A glycan (N-linked (GlcNAc...) asparagine) is linked at N64. One can recognise a Peptidase A1 domain in the interval Y79 to A392. D97 is an active-site residue. 2 disulfides stabilise this stretch: C110–C117 and C274–C278. The active site involves D283. A disulfide bond links C316 and C351.

The protein belongs to the peptidase A1 family. N-glycosylated. Expressed by the venom gland (at protein level).

Its subcellular location is the secreted. The catalysed reaction is Cleavage of Leu-|-Xaa bond in angiotensinogen to generate angiotensin I.. Inhibited completely by aspartyl protease inhibitor pepstatin A, but not by the serine- or metalloproteinase inhibitors PMSF or EDTA. Its function is as follows. Renin is a highly specific endopeptidase, whose only known function is to generate angiotensin I from angiotensinogen in the plasma, initiating a cascade of reactions that produce an elevation of blood pressure and increased sodium retention by the kidney. This protein is also found in snake venom and shown to specifically cleave human and porcine angiotensinogen into angiotensin I. It does not have general protease activity, no cleavage of alpha or beta casein. May be directly responsible for elevation of blood pressure in the victims of envenomation. The sequence is that of Renin from Echis ocellatus (Ocellated saw-scaled viper).